Here is a 785-residue protein sequence, read N- to C-terminus: 1-phosphatidylinositol 4,5-bisphosphate phosphodiesterase delta-3 (785 aa).

Residues 1 to 43 (MLCGGWKRSRRSPEESRVSAQVAAPLAFPPSPASSDSSTKRPG) are disordered. The PH domain maps to 65 to 168 (SRLLKIRSRT…WVRGLAKLRA (104 aa)). The tract at residues 69-97 (KIRSRTWHKERLYRLQEDGLSVWFQRRIP) is substrate binding. Serine 101 carries the post-translational modification Phosphoserine. EF-hand domains are found at residues 178-213 (RLDHWIHSYLHRADSDQDSKMSFKEIKSLLRMVNVD), 214-249 (MNDMYAYRLFKECDHSNNERLEGAEIEAFLRRLLKR), and 246-281 (LLKRPELEEIFRRYSGEDRVLSASELLEFLEDQGED). Residues aspartate 191, aspartate 193, aspartate 195, lysine 197, glutamate 202, aspartate 227, serine 229, asparagine 231, arginine 233, and glutamate 238 each contribute to the Ca(2+) site. Residues 333–478 (QDMGQPLAHY…LKGRILVKGK (146 aa)) enclose the PI-PLC X-box domain. Histidine 348 is a catalytic residue. Positions 349, 378, and 380 each coordinate Ca(2+). Histidine 393 is a catalytic residue. Residue glutamate 427 coordinates Ca(2+). Residues lysine 476 and lysine 478 each contribute to the substrate site. The segment covering 484–493 (RSEDGRILSD) has biased composition (basic and acidic residues). The interval 484–517 (RSEDGRILSDREEEEEEEEEAEEALEAAEQRSRA) is disordered. At serine 492 the chain carries Phosphoserine. Positions 494–509 (REEEEEEEEEAEEALE) are enriched in acidic residues. The 117-residue stretch at 524-640 (LSALAVYCCA…GYVLKPAYLR (117 aa)) folds into the PI-PLC Y-box domain. Serine 553 contacts substrate. Serine 569 carries the post-translational modification Phosphoserine. Arginine 580 contacts substrate. Positions 636–765 (PAYLRQLNTT…QGYRHIHLLS (130 aa)) constitute a C2 domain. The Ca(2+) site is built by isoleucine 679, aspartate 681, asparagine 705, aspartate 734, tyrosine 735, and aspartate 736.

Requires Ca(2+) as cofactor. Expressed in cerebellum and cerebral cortex.

Its subcellular location is the membrane. The protein resides in the cytoplasm. The protein localises to the cleavage furrow. It carries out the reaction a 1,2-diacyl-sn-glycero-3-phospho-(1D-myo-inositol-4,5-bisphosphate) + H2O = 1D-myo-inositol 1,4,5-trisphosphate + a 1,2-diacyl-sn-glycerol + H(+). Strongly activated by phosphatidic acid. Inhibited by phosphatidylethanolamine (PtdEtn), phosphatidylcholine (PtdCho), sphingomyelin and phosphatidylserine (PtdSer). Its function is as follows. Hydrolyzes the phosphatidylinositol 4,5-bisphosphate (PIP2) to generate 2 second messenger molecules diacylglycerol (DAG) and inositol 1,4,5-trisphosphate (IP3). DAG mediates the activation of protein kinase C (PKC), while IP3 releases Ca(2+) from intracellular stores. Essential for trophoblast and placental development. May participate in cytokinesis by hydrolyzing PIP2 at the cleavage furrow. Regulates neurite outgrowth through the inhibition of RhoA/Rho kinase signaling. The protein is 1-phosphatidylinositol 4,5-bisphosphate phosphodiesterase delta-3 of Mus musculus (Mouse).